The primary structure comprises 232 residues: Small ribosomal subunit protein uS3 (232 aa).

In terms of domain architecture, KH type-2 spans 39–107 (IRKFLKTKLY…DIAINIKEER (69 aa)). Basic and acidic residues predominate over residues 213–222 (QADKNEDTSP). Positions 213–232 (QADKNEDTSPKKPRRARRGK) are disordered. The segment covering 223 to 232 (KKPRRARRGK) has biased composition (basic residues).

The protein belongs to the universal ribosomal protein uS3 family. In terms of assembly, part of the 30S ribosomal subunit. Forms a tight complex with proteins S10 and S14.

Binds the lower part of the 30S subunit head. Binds mRNA in the 70S ribosome, positioning it for translation. The chain is Small ribosomal subunit protein uS3 from Campylobacter fetus subsp. fetus (strain 82-40).